The primary structure comprises 200 residues: uncharacterized protein (200 aa).

Residues 149-200 are disordered; the sequence is APDPGGSVATEEVLRSDDRDSHTQDSASEWPEGNDSVGSAAMRIDLSRIGGT. Residues 160–171 show a composition bias toward basic and acidic residues; that stretch reads EVLRSDDRDSHT.

To A.tumefaciens Ti plasmid conjugal transfer region I ORFR2 and ORFR3.

This is an uncharacterized protein from Sinorhizobium fredii (strain NBRC 101917 / NGR234).